A 224-amino-acid polypeptide reads, in one-letter code: Ribonuclease T (224 aa).

The Exonuclease domain occupies 20–194; that stretch reads VVIDVETAGF…YDTERTAELF (175 aa). Residues Asp23, Glu25, His181, and Asp186 each coordinate Mg(2+). His181 functions as the Proton donor/acceptor in the catalytic mechanism.

It belongs to the RNase T family. Homodimer. The cofactor is Mg(2+).

Trims short 3' overhangs of a variety of RNA species, leaving a one or two nucleotide 3' overhang. Responsible for the end-turnover of tRNA: specifically removes the terminal AMP residue from uncharged tRNA (tRNA-C-C-A). Also appears to be involved in tRNA biosynthesis. This Enterobacter sp. (strain 638) protein is Ribonuclease T.